A 301-amino-acid polypeptide reads, in one-letter code: 3-methyl-2-oxobutanoate hydroxymethyltransferase (301 aa).

The span at 1–28 (MATSNSSDSSMSAEVPAPYGNGPANAPA) shows a compositional bias: low complexity. The disordered stretch occupies residues 1–37 (MATSNSSDSSMSAEVPAPYGNGPANAPATPSDTAKKP). Mg(2+) is bound by residues Asp82 and Asp121. 3-methyl-2-oxobutanoate-binding positions include 82-83 (DS), Asp121, and Lys151. Glu153 contacts Mg(2+). The Proton acceptor role is filled by Glu219.

Belongs to the PanB family. Homodecamer; pentamer of dimers. It depends on Mg(2+) as a cofactor.

It is found in the cytoplasm. The enzyme catalyses 3-methyl-2-oxobutanoate + (6R)-5,10-methylene-5,6,7,8-tetrahydrofolate + H2O = 2-dehydropantoate + (6S)-5,6,7,8-tetrahydrofolate. It participates in cofactor biosynthesis; (R)-pantothenate biosynthesis; (R)-pantoate from 3-methyl-2-oxobutanoate: step 1/2. Functionally, catalyzes the reversible reaction in which hydroxymethyl group from 5,10-methylenetetrahydrofolate is transferred onto alpha-ketoisovalerate to form ketopantoate. In Arthrobacter sp. (strain FB24), this protein is 3-methyl-2-oxobutanoate hydroxymethyltransferase.